The following is a 143-amino-acid chain: Nucleoside diphosphate kinase (143 aa).

The ATP site is built by Lys11, Phe59, Arg87, Thr93, Arg104, and Asn114. His117 acts as the Pros-phosphohistidine intermediate in catalysis.

It belongs to the NDK family. As to quaternary structure, homotetramer. Mg(2+) is required as a cofactor.

It localises to the cytoplasm. It catalyses the reaction a 2'-deoxyribonucleoside 5'-diphosphate + ATP = a 2'-deoxyribonucleoside 5'-triphosphate + ADP. The enzyme catalyses a ribonucleoside 5'-diphosphate + ATP = a ribonucleoside 5'-triphosphate + ADP. In terms of biological role, major role in the synthesis of nucleoside triphosphates other than ATP. The ATP gamma phosphate is transferred to the NDP beta phosphate via a ping-pong mechanism, using a phosphorylated active-site intermediate. This is Nucleoside diphosphate kinase from Salmonella agona (strain SL483).